Reading from the N-terminus, the 274-residue chain is Large ribosomal subunit protein uL2 (274 aa).

Residues 228 to 254 (VDHPMGGGEGRASGGHPRSRKGLYAKG) are disordered. Positions 244–254 (PRSRKGLYAKG) are enriched in basic residues.

It belongs to the universal ribosomal protein uL2 family. In terms of assembly, part of the 50S ribosomal subunit. Forms a bridge to the 30S subunit in the 70S ribosome.

In terms of biological role, one of the primary rRNA binding proteins. Required for association of the 30S and 50S subunits to form the 70S ribosome, for tRNA binding and peptide bond formation. It has been suggested to have peptidyltransferase activity; this is somewhat controversial. Makes several contacts with the 16S rRNA in the 70S ribosome. This is Large ribosomal subunit protein uL2 from Azobacteroides pseudotrichonymphae genomovar. CFP2.